The sequence spans 382 residues: Ribosomal RNA large subunit methyltransferase G (382 aa).

This sequence belongs to the methyltransferase superfamily. RlmG family.

Its subcellular location is the cytoplasm. It carries out the reaction guanosine(1835) in 23S rRNA + S-adenosyl-L-methionine = N(2)-methylguanosine(1835) in 23S rRNA + S-adenosyl-L-homocysteine + H(+). Functionally, specifically methylates the guanine in position 1835 (m2G1835) of 23S rRNA. In Aliivibrio fischeri (strain MJ11) (Vibrio fischeri), this protein is Ribosomal RNA large subunit methyltransferase G.